A 215-amino-acid polypeptide reads, in one-letter code: MAEDTETRPASAGAEEREEGEIADDGDGSSAAAAGRITAHPLENAWTFWFDNPQGKSRQVAWGSTIHPIHTFSTVEDFWGLYNNIHNPSKLNVGADFHCFKNKIEPKWEDPICANGGKWTISCGRGKSDTFWLHTLLAMIGEQFDFGDEICGAVVSVRQKQERVAIWTKNAANEAAQISIGKQWKEFLDYKDSIGFIVHEDAKRSDKGPKNRYTV.

The segment at 1-32 (MAEDTETRPASAGAEEREEGEIADDGDGSSAA) is disordered. Residues 16 to 27 (EREEGEIADDGD) show a composition bias toward acidic residues. 2 EIF4G-binding regions span residues 40-43 (HPLE) and 50-86 (FDNP…NNIH). Residues 58–63 (RQVAWG), K90, and 108–109 (WE) each bind mRNA. C113 and C151 are oxidised to a cystine. Residues 134-143 (HTLLAMIGEQ) form an EIF4G-binding region. MRNA is bound by residues 158–163 (RQKQER) and 203–207 (KRSDK).

The protein belongs to the eukaryotic initiation factor 4E family. EIF4F is a multi-subunit complex, the composition of which varies with external and internal environmental conditions. It is composed of at least EIF4A, EIF4E and EIF4G. EIF4E is also known to interact with other partners. In higher plants two isoforms of EIF4F have been identified, named isoform EIF4F and isoform EIF(iso)4F. Isoform EIF4F has subunits p220 and p26, whereas isoform EIF(iso)4F has subunits p82 and p28. In terms of processing, according to the redox status, the Cys-113-Cys-151 disulfide bridge may have a role in regulating protein function by affecting its ability to bind capped mRNA.

It localises to the nucleus. The protein resides in the cytoplasm. Its function is as follows. Component of the protein complex eIF4F, which is involved in the recognition of the mRNA cap, ATP-dependent unwinding of 5'-terminal secondary structure and recruitment of mRNA to the ribosome. Recognizes and binds the 7-methylguanosine-containing mRNA cap during an early step in the initiation of protein synthesis and facilitates ribosome binding by inducing the unwinding of the mRNAs secondary structures. The protein is Eukaryotic translation initiation factor 4E-1 of Triticum aestivum (Wheat).